Here is a 727-residue protein sequence, read N- to C-terminus: Transcription activator of gluconeogenesis TRV_01442 (727 aa).

Positions 1–32 (MSPHQTTGQESDNMTVNGENAQASSQYIQSNE) are enriched in polar residues. The segment at 1–62 (MSPHQTTGQE…PSRPKRKKAK (62 aa)) is disordered. The span at 39 to 55 (ATEKKASAAKAAKDPSR) shows a compositional bias: basic and acidic residues. The segment at residues 65–93 (CYACQRGHLTCGDERPCQRCIKRGFQDAC) is a DNA-binding region (zn(2)-C6 fungal-type). Polar residues-rich tracts occupy residues 129-213 (NNVN…TPSA), 267-277 (PSDSGAQRGSI), and 361-379 (MMTT…GAFN). Disordered stretches follow at residues 129–224 (NNVN…FNST), 264–297 (DTPP…ESPS), 353–399 (SPAS…STPQ), 533–567 (NHNV…YNSS), and 627–666 (GSNG…QRRW). Low complexity-rich tracts occupy residues 380–399 (SRQN…STPQ) and 543–553 (GLMTGSTSRGS). A compositionally biased stretch (polar residues) spans 639–661 (EATSNETNELNGSHTNGATTNGR).

Belongs to the ERT1/acuK family.

Its subcellular location is the nucleus. Its function is as follows. Transcription factor which regulates nonfermentable carbon utilization. Activator of gluconeogenetic genes. The polypeptide is Transcription activator of gluconeogenesis TRV_01442 (Trichophyton verrucosum (strain HKI 0517)).